Reading from the N-terminus, the 205-residue chain is High frequency lysogenization protein HflD homolog (205 aa).

It belongs to the HflD family.

The protein localises to the cytoplasm. The protein resides in the cell inner membrane. In Vibrio campbellii (strain ATCC BAA-1116), this protein is High frequency lysogenization protein HflD homolog.